A 554-amino-acid chain; its full sequence is Calcium-dependent protein kinase 3 (554 aa).

A disordered region spans residues 30-55; sequence KKKSSNKSIKSQHKFEGSKIANKNNE. Positions 110-365 constitute a Protein kinase domain; sequence NLSEEPLGKG…ASEALKHPWF (256 aa). Residues 116 to 124 and Lys-139 each bind ATP; that span reads LGKGTYGCV. Residue Asp-230 is the Proton acceptor of the active site. A J domain autoinhibitory motif motif is present at residues 385 to 393; the sequence is NFKNYALLL. Residues 385-420 form a j domain region; the sequence is NFKNYALLLKLQKLAMTIIAQQSNDYDLQQLKTVFL. Residues 394–403 carry the J domain EF-hand interaction motif motif; it reads KLQKLAMTII. 4 EF-hand domains span residues 410-445, 448-479, 480-515, and 521-554; these read YDLQ…SGLK, QNFD…DRKH, LSKK…GNKK, and KDVN…KLKY. Residues Asp-458, Asp-460, Ser-462, Arg-464, Glu-469, Asp-493, Asp-495, Asp-497, Glu-499, Glu-504, Asp-534, Asn-536, Asp-538, Lys-540, and Glu-545 each coordinate Ca(2+).

This sequence belongs to the protein kinase superfamily. Ser/Thr protein kinase family. CDPK subfamily. Mg(2+) serves as cofactor.

The protein localises to the cytoplasm. The catalysed reaction is L-seryl-[protein] + ATP = O-phospho-L-seryl-[protein] + ADP + H(+). It catalyses the reaction L-threonyl-[protein] + ATP = O-phospho-L-threonyl-[protein] + ADP + H(+). Its activity is regulated as follows. Activated by calcium. Upon calcium binding to the EF-hand domain 2, the C-terminus of the junction domain (J domain) undergoes a conformational change which results in the dissociation of the pseudo-substrate inhibitory motif from the catalytic domain. This, in turn, may facilitate the autophosphorylation of the activation loop at Thr-271, which leads to the kinase activation. Calcium-dependent protein kinase which acts as a sensor and effector of intracellular Ca(2+) levels probably in part downstream of cGMP-activated PKG kinase. In the mosquito midgut, regulates the gliding motility of the ookinete which is essential for the ookinete to invade the midgut epithelium. However, another study showed that while required for ookinete invasion of the midgut epithelium, is not required for ookinete gliding motility. This is Calcium-dependent protein kinase 3 from Plasmodium berghei (strain Anka).